The primary structure comprises 201 residues: Large ribosomal subunit protein uL4 (201 aa).

The disordered stretch occupies residues Arg44–Gly71.

Belongs to the universal ribosomal protein uL4 family. In terms of assembly, part of the 50S ribosomal subunit.

Functionally, one of the primary rRNA binding proteins, this protein initially binds near the 5'-end of the 23S rRNA. It is important during the early stages of 50S assembly. It makes multiple contacts with different domains of the 23S rRNA in the assembled 50S subunit and ribosome. Forms part of the polypeptide exit tunnel. The sequence is that of Large ribosomal subunit protein uL4 from Photorhabdus laumondii subsp. laumondii (strain DSM 15139 / CIP 105565 / TT01) (Photorhabdus luminescens subsp. laumondii).